The sequence spans 944 residues: snRNA-activating protein complex subunit 4 homolog (944 aa).

A disordered region spans residues 1 to 22; the sequence is MSDLVMFEPGASTSTDVPTNTD. A compositionally biased stretch (polar residues) spans 11–22; sequence ASTSTDVPTNTD. Positions 177 to 244 constitute a Myb-like 1 domain; that stretch reads TSNFDRRQWT…AVKSKWYNEL (68 aa). The 57-residue stretch at 245–301 folds into the HTH myb-type 1 domain; that stretch reads NPKWNKEHWSNEEVEKLKYLRESPKFVSWPMLALNLGTNRTSYQCMEKYKTEVSQHS. Residues 273-297 constitute a DNA-binding region (H-T-H motif); sequence WPMLALNLGTNRTSYQCMEKYKTEV. The region spanning 304–350 is the Myb-like 2 domain; that stretch reads WSQDEDTKLIALTKITSINGHIQWDKVAQCMPGRTRQQVRTRFSHTL. HTH myb-type domains follow at residues 351–406 and 407–459; these read DASV…NRSA and HVNE…AAKL. DNA-binding regions (H-T-H motif) lie at residues 379-402 and 432-455; these read WAKV…TNVL and WAKC…LQLI. The segment covering 911–921 has biased composition (low complexity); the sequence is ARPARPPRSSA. A disordered region spans residues 911-935; it reads ARPARPPRSSAGTPTPSHVSIDTES. The segment covering 922-935 has biased composition (polar residues); it reads GTPTPSHVSIDTES.

Broadly expressed in all tissues, including head, vulva and tail.

Its subcellular location is the nucleus. Binds to the promoter regions of RNA polymerase II and III small-nuclear RNA genes, type 3 RNA polymerase III non-coding RNA genes, small nucleolar RNAs and transfer RNA genes. Required for expression of mature 21U-RNAs. This Caenorhabditis elegans protein is snRNA-activating protein complex subunit 4 homolog.